The chain runs to 244 residues: Cysteine-rich secretory protein 2 (244 aa).

The signal sequence occupies residues methionine 1–asparagine 21. Residues asparagine 43–tyrosine 170 form the SCP domain. 5 cysteine pairs are disulfide-bonded: cysteine 190/cysteine 197, cysteine 193/cysteine 202, cysteine 206/cysteine 239, cysteine 215/cysteine 233, and cysteine 224/cysteine 237. Residues cysteine 206–cysteine 239 enclose the ShKT domain.

This sequence belongs to the CRISP family. Interacts with NSUN4 isoform 3. As to expression, testis.

The protein localises to the secreted. In terms of biological role, may regulate some ion channels' activity and thereby regulate calcium fluxes during sperm capacitation. This chain is Cysteine-rich secretory protein 2 (CRISP2), found in Cavia porcellus (Guinea pig).